Reading from the N-terminus, the 46-residue chain is Amine oxidase [flavin-containing] A (46 aa).

The protein belongs to the flavin monoamine oxidase family. As to quaternary structure, monomer, homo- or heterodimer (containing two subunits of similar size). Each subunit contains a covalently bound flavin. Enzymatically active as monomer. FAD serves as cofactor.

Its subcellular location is the mitochondrion outer membrane. The enzyme catalyses a secondary aliphatic amine + O2 + H2O = a primary amine + an aldehyde + H2O2. The catalysed reaction is a primary methyl amine + O2 + H2O = an aldehyde + H2O2 + NH4(+). It carries out the reaction (R)-adrenaline + O2 + H2O = (R)-3,4-dihydroxymandelaldehyde + methylamine + H2O2. It catalyses the reaction dopamine + O2 + H2O = 3,4-dihydroxyphenylacetaldehyde + H2O2 + NH4(+). The enzyme catalyses tyramine + O2 + H2O = (4-hydroxyphenyl)acetaldehyde + H2O2 + NH4(+). The catalysed reaction is (R)-noradrenaline + O2 + H2O = (R)-3,4-dihydroxymandelaldehyde + H2O2 + NH4(+). It carries out the reaction serotonin + O2 + H2O = (5-hydroxyindol-3-yl)acetaldehyde + H2O2 + NH4(+). It catalyses the reaction kynuramine + O2 + H2O = 3-(2-aminophenyl)-3-oxopropanal + H2O2 + NH4(+). The enzyme catalyses tryptamine + O2 + H2O = indole-3-acetaldehyde + H2O2 + NH4(+). The catalysed reaction is 2-phenylethylamine + O2 + H2O = 2-phenylacetaldehyde + H2O2 + NH4(+). In terms of biological role, catalyzes the oxidative deamination of primary and some secondary amine such as neurotransmitters, with concomitant reduction of oxygen to hydrogen peroxide and has important functions in the metabolism of neuroactive and vasoactive amines in the central nervous system and peripheral tissues. Preferentially oxidizes serotonin. Also catalyzes the oxidative deamination of kynuramine to 3-(2-aminophenyl)-3-oxopropanal that can spontaneously condense to 4-hydroxyquinoline. The polypeptide is Amine oxidase [flavin-containing] A (Ovis aries (Sheep)).